A 97-amino-acid chain; its full sequence is Secreted Ly-6/uPAR domain-containing protein 2 (97 aa).

A signal peptide spans 1–22 (MQFHTGLLLAAVLSLQLAAAQA). In terms of domain architecture, UPAR/Ly6 spans 23–95 (LWCHQCTGFG…IACCQTSLCN (73 aa)). Disulfide bonds link Cys25–Cys47, Cys28–Cys34, Cys40–Cys68, Cys72–Cys88, and Cys89–Cys94.

As to quaternary structure, interacts with CHRNA3, CHRNA4, CHRNA5, CHRNA7, CHRNB2 and CHRNB4. Interacts with CHRM1 and CHRM3 probably in an allosteric manner.

It is found in the secreted. Binds and may modulate the functional properties of nicotinic and muscarinic acetylcholine receptors. May regulate keratinocytes proliferation, differentiation and apoptosis. In vitro moderately inhibits ACh-evoked currents of alpha-3:beta-2-containing nAChRs, strongly these of alpha-4:beta-2-containing nAChRs, modulates alpha-7-containing nAChRs, and inhibits nicotine-induced signaling probably implicating alpha-3:beta-4-containing nAChRs. Proposed to act on alpha-3:beta-2 and alpha-7 nAChRs in an orthosteric, and on mAChRs, such as CHRM1 and CHRM3, in an allosteric manner. This is Secreted Ly-6/uPAR domain-containing protein 2 from Macaca mulatta (Rhesus macaque).